A 436-amino-acid polypeptide reads, in one-letter code: Proline transporter 3 (436 aa).

Helical transmembrane passes span 29-49, 52-72, 118-138, 151-171, 172-192, 216-236, 254-274, 296-316, 345-365, 366-386, and 405-425; these read SWFQ…VLGY, TVMV…ATAI, LFMI…AVYV, FIAI…HLSA, LGIW…VAIV, LFTI…GMLP, LYFQ…IGYW, ALAN…FASP, GGYI…GDFM, SLTG…HMYY, and VVFF…LIAL.

The protein belongs to the amino acid/polyamine transporter 2 family. Amino acid/auxin permease (AAAP) (TC 2.A.18.3) subfamily. Expressed in epidermal cells of leaves, sepals and petals.

It localises to the cell membrane. Functionally, proline transporter that mediates proline and glycine betaine transport. When expressed in a heterologous system (yeast), imports L-proline, glycine betaine and GABA across the plasma membrane. This is Proline transporter 3 (PROT3) from Arabidopsis thaliana (Mouse-ear cress).